The following is a 239-amino-acid chain: tRNA (guanine-N(1)-)-methyltransferase (239 aa).

Residues glycine 110 and 130-135 (VGDYVL) contribute to the S-adenosyl-L-methionine site.

This sequence belongs to the RNA methyltransferase TrmD family. As to quaternary structure, homodimer.

It is found in the cytoplasm. It catalyses the reaction guanosine(37) in tRNA + S-adenosyl-L-methionine = N(1)-methylguanosine(37) in tRNA + S-adenosyl-L-homocysteine + H(+). In terms of biological role, specifically methylates guanosine-37 in various tRNAs. The polypeptide is tRNA (guanine-N(1)-)-methyltransferase (Borrelia turicatae (strain 91E135)).